The chain runs to 343 residues: Aspartate beta-hydroxylase domain-containing protein 2 (343 aa).

Over 1–31 the chain is Cytoplasmic; sequence MWLEWLVAWSWSLDGLRDCIATGIQSVRDCD. The chain crosses the membrane as a helical span at residues 32-52; the sequence is GTAVITVACLLILFVWYCYHV. At 53-343 the chain is on the lumenal side; it reads GREQPRPHVS…ALDFIFAPGR (291 aa). N-linked (GlcNAc...) asparagine glycans are attached at residues asparagine 77 and asparagine 185. Residues tryptophan 202 and serine 246 each contribute to the 2-oxoglutarate site. Histidine 257 contributes to the Fe cation binding site. 266–268 serves as a coordination point for 2-oxoglutarate; it reads RCH. Fe cation is bound at residue histidine 302. Residue arginine 315 participates in 2-oxoglutarate binding.

The protein belongs to the aspartyl/asparaginyl beta-hydroxylase family. Fe cation is required as a cofactor.

The protein localises to the membrane. In terms of biological role, may function as 2-oxoglutarate-dependent dioxygenase. The polypeptide is Aspartate beta-hydroxylase domain-containing protein 2 (Asphd2) (Mus musculus (Mouse)).